Here is a 113-residue protein sequence, read N- to C-terminus: Small ribosomal subunit protein bS6 (113 aa).

Belongs to the bacterial ribosomal protein bS6 family.

Functionally, binds together with bS18 to 16S ribosomal RNA. The sequence is that of Small ribosomal subunit protein bS6 (rpsF) from Buchnera aphidicola subsp. Acyrthosiphon pisum (strain APS) (Acyrthosiphon pisum symbiotic bacterium).